A 553-amino-acid polypeptide reads, in one-letter code: Arginine--tRNA ligase (553 aa).

Positions 123 to 133 (ANPTGPLTIGR) match the 'HIGH' region motif.

This sequence belongs to the class-I aminoacyl-tRNA synthetase family. Monomer.

It localises to the cytoplasm. It catalyses the reaction tRNA(Arg) + L-arginine + ATP = L-arginyl-tRNA(Arg) + AMP + diphosphate. In Chlorobium phaeobacteroides (strain BS1), this protein is Arginine--tRNA ligase.